The chain runs to 402 residues: S-adenosylmethionine synthase (402 aa).

His16 is an ATP binding site. Asp18 lines the Mg(2+) pocket. Glu44 provides a ligand contact to K(+). L-methionine contacts are provided by Glu57 and Gln109. Residues Gln109–Ala119 are flexible loop. Residues Asp174 to Lys176, Asp252, Arg258 to Lys259, Ala275, and Lys279 each bind ATP. Asp252 is an L-methionine binding site. L-methionine is bound at residue Lys283.

Belongs to the AdoMet synthase family. Homotetramer; dimer of dimers. Requires Mg(2+) as cofactor. The cofactor is K(+).

The protein resides in the cytoplasm. The enzyme catalyses L-methionine + ATP + H2O = S-adenosyl-L-methionine + phosphate + diphosphate. It functions in the pathway amino-acid biosynthesis; S-adenosyl-L-methionine biosynthesis; S-adenosyl-L-methionine from L-methionine: step 1/1. Functionally, catalyzes the formation of S-adenosylmethionine (AdoMet) from methionine and ATP. The overall synthetic reaction is composed of two sequential steps, AdoMet formation and the subsequent tripolyphosphate hydrolysis which occurs prior to release of AdoMet from the enzyme. The protein is S-adenosylmethionine synthase of Rhizorhabdus wittichii (strain DSM 6014 / CCUG 31198 / JCM 15750 / NBRC 105917 / EY 4224 / RW1) (Sphingomonas wittichii).